Consider the following 278-residue polypeptide: Shikimate dehydrogenase (NADP(+)) (278 aa).

Shikimate contacts are provided by residues 15 to 17 (SMS) and Thr62. Lys66 functions as the Proton acceptor in the catalytic mechanism. NADP(+) is bound at residue Glu78. Residues Asn87 and Asp102 each contribute to the shikimate site. NADP(+)-binding positions include 127 to 131 (GAGGA), 151 to 156 (NRTPEK), and Ile217. Tyr219 contacts shikimate. Residue Gly240 participates in NADP(+) binding.

This sequence belongs to the shikimate dehydrogenase family. As to quaternary structure, homodimer.

The catalysed reaction is shikimate + NADP(+) = 3-dehydroshikimate + NADPH + H(+). It participates in metabolic intermediate biosynthesis; chorismate biosynthesis; chorismate from D-erythrose 4-phosphate and phosphoenolpyruvate: step 4/7. In terms of biological role, involved in the biosynthesis of the chorismate, which leads to the biosynthesis of aromatic amino acids. Catalyzes the reversible NADPH linked reduction of 3-dehydroshikimate (DHSA) to yield shikimate (SA). This chain is Shikimate dehydrogenase (NADP(+)), found in Bacillus licheniformis (strain ATCC 14580 / DSM 13 / JCM 2505 / CCUG 7422 / NBRC 12200 / NCIMB 9375 / NCTC 10341 / NRRL NRS-1264 / Gibson 46).